The primary structure comprises 233 residues: Methylthioribulose-1-phosphate dehydratase (233 aa).

A substrate-binding site is contributed by C91. 2 residues coordinate Zn(2+): H108 and H110. E137 (proton donor/acceptor) is an active-site residue. H194 contributes to the Zn(2+) binding site.

This sequence belongs to the aldolase class II family. MtnB subfamily. Zn(2+) is required as a cofactor.

It localises to the cytoplasm. The enzyme catalyses 5-(methylsulfanyl)-D-ribulose 1-phosphate = 5-methylsulfanyl-2,3-dioxopentyl phosphate + H2O. It participates in amino-acid biosynthesis; L-methionine biosynthesis via salvage pathway; L-methionine from S-methyl-5-thio-alpha-D-ribose 1-phosphate: step 2/6. Catalyzes the dehydration of methylthioribulose-1-phosphate (MTRu-1-P) into 2,3-diketo-5-methylthiopentyl-1-phosphate (DK-MTP-1-P). In Phaeosphaeria nodorum (strain SN15 / ATCC MYA-4574 / FGSC 10173) (Glume blotch fungus), this protein is Methylthioribulose-1-phosphate dehydratase.